The chain runs to 148 residues: Lysozyme C (148 aa).

The N-terminal stretch at Met1–Gly18 is a signal peptide. One can recognise a C-type lysozyme domain in the interval Lys19 to Val148. 4 cysteine pairs are disulfide-bonded: Cys24/Cys146, Cys48/Cys134, Cys83/Cys99, and Cys95/Cys113. Active-site residues include Glu53 and Asp71.

It belongs to the glycosyl hydrolase 22 family. As to quaternary structure, monomer.

It localises to the secreted. It catalyses the reaction Hydrolysis of (1-&gt;4)-beta-linkages between N-acetylmuramic acid and N-acetyl-D-glucosamine residues in a peptidoglycan and between N-acetyl-D-glucosamine residues in chitodextrins.. Functionally, lysozymes have primarily a bacteriolytic function; those in tissues and body fluids are associated with the monocyte-macrophage system and enhance the activity of immunoagents. Also plays a role in digestion in this species. This is Lysozyme C (LYZ) from Trachypithecus francoisi (Francois' leaf monkey).